Here is a 228-residue protein sequence, read N- to C-terminus: Methylthioribulose-1-phosphate dehydratase (228 aa).

Position 92 (cysteine 92) interacts with substrate. Positions 110 and 112 each coordinate Zn(2+). Glutamate 135 (proton donor/acceptor) is an active-site residue. A Zn(2+)-binding site is contributed by histidine 192.

Belongs to the aldolase class II family. MtnB subfamily. The cofactor is Zn(2+).

The protein resides in the cytoplasm. Its subcellular location is the nucleus. The catalysed reaction is 5-(methylsulfanyl)-D-ribulose 1-phosphate = 5-methylsulfanyl-2,3-dioxopentyl phosphate + H2O. Its pathway is amino-acid biosynthesis; L-methionine biosynthesis via salvage pathway; L-methionine from S-methyl-5-thio-alpha-D-ribose 1-phosphate: step 2/6. Its function is as follows. Catalyzes the dehydration of methylthioribulose-1-phosphate (MTRu-1-P) into 2,3-diketo-5-methylthiopentyl-1-phosphate (DK-MTP-1-P). This is Methylthioribulose-1-phosphate dehydratase from Schizosaccharomyces pombe (strain 972 / ATCC 24843) (Fission yeast).